The chain runs to 184 residues: Photosystem I assembly protein Ycf4 (184 aa).

2 consecutive transmembrane segments (helical) span residues 21–43 (NYFW…VSSY) and 63–85 (GIVM…FTIF).

Belongs to the Ycf4 family.

The protein resides in the plastid. Its subcellular location is the chloroplast thylakoid membrane. Seems to be required for the assembly of the photosystem I complex. The sequence is that of Photosystem I assembly protein Ycf4 from Chaetosphaeridium globosum (Charophycean green alga).